A 259-amino-acid chain; its full sequence is Imidazole glycerol phosphate synthase subunit HisF (259 aa).

Active-site residues include Asp-11 and Asp-130.

This sequence belongs to the HisA/HisF family. Heterodimer of HisH and HisF.

Its subcellular location is the cytoplasm. The enzyme catalyses 5-[(5-phospho-1-deoxy-D-ribulos-1-ylimino)methylamino]-1-(5-phospho-beta-D-ribosyl)imidazole-4-carboxamide + L-glutamine = D-erythro-1-(imidazol-4-yl)glycerol 3-phosphate + 5-amino-1-(5-phospho-beta-D-ribosyl)imidazole-4-carboxamide + L-glutamate + H(+). It participates in amino-acid biosynthesis; L-histidine biosynthesis; L-histidine from 5-phospho-alpha-D-ribose 1-diphosphate: step 5/9. In terms of biological role, IGPS catalyzes the conversion of PRFAR and glutamine to IGP, AICAR and glutamate. The HisF subunit catalyzes the cyclization activity that produces IGP and AICAR from PRFAR using the ammonia provided by the HisH subunit. In Lactococcus lactis subsp. cremoris (strain MG1363), this protein is Imidazole glycerol phosphate synthase subunit HisF.